We begin with the raw amino-acid sequence, 70 residues long: Large ribosomal subunit protein bL31 (70 aa).

Residues Cys16, Cys18, Cys37, and Cys40 each coordinate Zn(2+).

The protein belongs to the bacterial ribosomal protein bL31 family. Type A subfamily. Part of the 50S ribosomal subunit. Zn(2+) is required as a cofactor.

Functionally, binds the 23S rRNA. The chain is Large ribosomal subunit protein bL31 from Shewanella woodyi (strain ATCC 51908 / MS32).